A 2263-amino-acid chain; its full sequence is Collagen alpha-6(VI) chain (2263 aa).

An N-terminal signal peptide occupies residues 1-19; the sequence is MMLLILFLVIICSHISVNQ. Residues 20–1391 form a nonhelical region region; it reads DSGPEYADVV…TCCCLFCKCI (1372 aa). 5 consecutive VWFA domains span residues 27–206, 229–411, 436–606, 622–791, and 809–982; these read DVVF…IKDV, DVVF…RNQI, DIYL…RNQV, DIMF…EDDL, and DVVF…FSDV. Residues Asn198, Asn275, Asn288, Asn347, and Asn520 are each glycosylated (N-linked (GlcNAc...) asparagine). N-linked (GlcNAc...) asparagine glycans are attached at residues Asn930 and Asn988. VWFA domains follow at residues 1000–1171 and 1187–1371; these read DLVF…NKRI and DVVV…GSRL. An N-linked (GlcNAc...) asparagine glycan is attached at Asn1290. Positions 1392-1725 are triple-helical region; the sequence is GGDGTMGDPG…GRKGVKGAKG (334 aa). The segment at 1397–1723 is disordered; sequence MGDPGPPGKR…PPGRKGVKGA (327 aa). The segment covering 1498 to 1508 has biased composition (basic and acidic residues); sequence TPGDRGAKGLR. A Cell attachment site motif is present at residues 1508-1510; sequence RGD. Residues 1547-1559 show a composition bias toward basic residues; the sequence is SRRKTAAHGRRGH. The segment covering 1680–1689 has biased composition (gly residues); sequence GDPGGPGETG. The segment at 1726–2263 is nonhelical region; that stretch reads LASFSTCELI…MIESAPKQHD (538 aa). 2 consecutive VWFA domains span residues 1757–1937 and 1965–2166; these read ELVF…ERLQ and DAAF…INSI.

It belongs to the type VI collagen family. Trimers composed of three different chains: alpha-1(VI), alpha-2(VI), and alpha-3(VI) or alpha-5(VI) or alpha-6(VI). In terms of processing, prolines at the third position of the tripeptide repeating unit (G-X-Y) are hydroxylated in some or all of the chains.

It localises to the secreted. Its subcellular location is the extracellular space. It is found in the extracellular matrix. Its function is as follows. Collagen VI acts as a cell-binding protein. This Homo sapiens (Human) protein is Collagen alpha-6(VI) chain (COL6A6).